The following is a 276-amino-acid chain: MGIKKFKPTTNGRRNMTALDFAEITASRPEKSLTEKLSKKGGRNNQGRLTVRHQGGGHKRKYRIIDFKRNKDGIAGRIATIEYDPNRSANIALVHYIDGEKRYILAPKGLKVDMQVMSGVEADIKVGNALPLSNIPVGTLIHNIELKPGKGGQLVRSAGTSAQLLGKDGKYAIVRLQSGETRMILATCRATVGAVGNEEHELVNIGKAGRSRWLGKRPTVRGSVMNPVDHPHGGGEGRAPIGRSGPLTPWGKPALGYKTRKKNKASDKYIVRRSKK.

2 disordered regions span residues 30-57 and 219-276; these read EKSL…QGGG and TVRG…RSKK.

It belongs to the universal ribosomal protein uL2 family. As to quaternary structure, part of the 50S ribosomal subunit. Forms a bridge to the 30S subunit in the 70S ribosome.

Its function is as follows. One of the primary rRNA binding proteins. Required for association of the 30S and 50S subunits to form the 70S ribosome, for tRNA binding and peptide bond formation. It has been suggested to have peptidyltransferase activity; this is somewhat controversial. Makes several contacts with the 16S rRNA in the 70S ribosome. This chain is Large ribosomal subunit protein uL2, found in Exiguobacterium sibiricum (strain DSM 17290 / CCUG 55495 / CIP 109462 / JCM 13490 / 255-15).